The following is a 415-amino-acid chain: Gamma-glutamyl phosphate reductase (415 aa).

Belongs to the gamma-glutamyl phosphate reductase family.

It localises to the cytoplasm. The enzyme catalyses L-glutamate 5-semialdehyde + phosphate + NADP(+) = L-glutamyl 5-phosphate + NADPH + H(+). The protein operates within amino-acid biosynthesis; L-proline biosynthesis; L-glutamate 5-semialdehyde from L-glutamate: step 2/2. Functionally, catalyzes the NADPH-dependent reduction of L-glutamate 5-phosphate into L-glutamate 5-semialdehyde and phosphate. The product spontaneously undergoes cyclization to form 1-pyrroline-5-carboxylate. The chain is Gamma-glutamyl phosphate reductase from Mycolicibacterium vanbaalenii (strain DSM 7251 / JCM 13017 / BCRC 16820 / KCTC 9966 / NRRL B-24157 / PYR-1) (Mycobacterium vanbaalenii).